The chain runs to 660 residues: Interferon-induced GTP-binding protein Mx1 (660 aa).

Position 1 is an N-acetylmethionine (M1). Residues 1-10 (MVHSEAKMTR) are compositionally biased toward basic and acidic residues. A disordered region spans residues 1–29 (MVHSEAKMTRPDSASASKQQLLNGNADIQ). Residues 12 to 29 (DSASASKQQLLNGNADIQ) show a composition bias toward polar residues. The region spanning 67-340 (DLALPAIAVI…LITHISKSLP (274 aa)) is the Dynamin-type G domain. The segment at 77-84 (GDQSSGKS) is G1 motif. Position 77 to 84 (77 to 84 (GDQSSGKS)) interacts with GTP. A G2 motif region spans residues 102–104 (VTR). Positions 178–181 (DLPG) are G3 motif. Residues 178-182 (DLPGI) and 247-250 (TKPD) each bind GTP. The interval 247–250 (TKPD) is G4 motif. The tract at residues 279 to 282 (KCRG) is G5 motif. The tract at residues 341-366 (LLENQIKESYQNLSDELQKYGTDIPE) is bundle signaling element (BSE). The tract at residues 366 to 533 (EDETEKTFFL…HFQMEKIVYC (168 aa)) is middle domain. The segment at 367 to 630 (DETEKTFFLI…RDTYDWLLKE (264 aa)) is stalk. Residues 554–557 (KKKK) are critical for lipid-binding. The region spanning 572 to 660 (MAEILEHLNA…ARRRLAKFPG (89 aa)) is the GED domain.

Belongs to the TRAFAC class dynamin-like GTPase superfamily. Dynamin/Fzo/YdjA family. In terms of assembly, homooligomer. Oligomerizes into multimeric filamentous or ring-like structures by virtue of its stalk domain. Oligomerization is critical for GTPase activity, protein stability, and recognition of viral target structures. Interacts with TRPC1, TRPC3, TRPC4, TRPC5, TRPC6 and TRPC7. Interacts with HSPA5. Interacts with TUBB/TUBB5. Interacts with DDX39A and DDX39B. ISGylated.

It is found in the cytoplasm. The protein resides in the endoplasmic reticulum membrane. Its subcellular location is the perinuclear region. Its function is as follows. Interferon-induced dynamin-like GTPase with antiviral activity. In Equus caballus (Horse), this protein is Interferon-induced GTP-binding protein Mx1 (MX1).